Consider the following 501-residue polypeptide: COP9 signalosome complex subunit 3 (501 aa).

Residues 275 to 445 (RFEDALFLLE…VFWTELSPVP (171 aa)) enclose the PCI domain.

It belongs to the CSN3 family. As to quaternary structure, component of the CSN complex, probably composed of csn-1, csn-2, csn-3, csn-4, csn-5, csn-6 and csn-7. Within the complex it probably interacts directly with csn-2 and csn-4. May interact with itself.

The protein resides in the cytoplasm. The protein localises to the nucleus. In terms of biological role, component of the COP9 signalosome complex (CSN), a complex involved in various cellular and developmental processes. The CSN complex is an essential regulator of the ubiquitin (Ubl) conjugation pathway by mediating the deneddylation of the cullin subunits of the SCF-type E3 ligase complexes, leading to decrease the Ubl ligase activity of SCF. The CSN complex plays an essential role in embryogenesis and oogenesis and is required to regulate microtubule stability in the early embryo. Mediates mei-3/katanin targeting for degradation at the meiosis to mitosis transition via deneddylation of cul-3. In Caenorhabditis elegans, this protein is COP9 signalosome complex subunit 3 (csn-3).